Reading from the N-terminus, the 281-residue chain is MSFRERLEQTIAQNHSLLCIGLDPDLERFPTGIPRDPEGIVVFNRAIIEATADLVCAYKPNLAFYLQYGAAGIAALATTRQLIPPHIPVILDAKLGDIASTSAAYARAVFETLGFDALTVHPYLGSEALEPFLSTSDRGVFVLVRTSNPGASEIQDLPVGEAGEPLYLWLAERARAWNQRSGNVGLVVGATYPVDLALVRQRCPDLPILAPGIGAQGGDLERAVCAGLTEATAPLLVTVSRSILYADASARFAESARAAARRVRDTIERIRKEVAGQAGHR.

Lys94 acts as the Proton donor in catalysis.

The protein belongs to the OMP decarboxylase family. Type 2 subfamily.

It carries out the reaction orotidine 5'-phosphate + H(+) = UMP + CO2. Its pathway is pyrimidine metabolism; UMP biosynthesis via de novo pathway; UMP from orotate: step 2/2. The protein is Orotidine 5'-phosphate decarboxylase of Thermomicrobium roseum (strain ATCC 27502 / DSM 5159 / P-2).